A 224-amino-acid chain; its full sequence is Synaptogyrin-2 (224 aa).

At Met-1 the chain carries N-acetylmethionine. Position 3 is a phosphoserine (Ser-3). The MARVEL domain maps to 20-171; the sequence is FLTQPQVVAR…LASLAYQRYK (152 aa). 4 consecutive transmembrane segments (helical) span residues 26-46, 73-93, 105-125, and 147-167; these read VVAR…IYGE, AIGV…AYFP, VIGD…GFCF, and AAIT…SLAY.

This sequence belongs to the synaptogyrin family. As to quaternary structure, (Microbial infection) Interacts with SFTS phlebovirus protein NSs; may be involved in virus replication. May be tyrosine phosphorylated by Src. Ubiquitous; low expression in brain.

It localises to the cytoplasmic vesicle membrane. The protein resides in the cytoplasmic vesicle. The protein localises to the secretory vesicle. It is found in the synaptic vesicle membrane. Its subcellular location is the lipid droplet. In terms of biological role, may play a role in regulated exocytosis. In neuronal cells, modulates the localization of synaptophysin/SYP into synaptic-like microvesicles and may therefore play a role in the formation and/or the maturation of this vesicles. May also play a role in GLUT4 storage and transport to the plasma membrane. Functionally, (Microbial infection) May play a role in the assembly of cytoplasmic inclusion bodies required for SFTS phlebovirus replication. This Homo sapiens (Human) protein is Synaptogyrin-2.